Consider the following 151-residue polypeptide: Large ribosomal subunit protein bL9 (151 aa).

This sequence belongs to the bacterial ribosomal protein bL9 family.

Binds to the 23S rRNA. The chain is Large ribosomal subunit protein bL9 from Chlorobium limicola (strain DSM 245 / NBRC 103803 / 6330).